A 100-amino-acid chain; its full sequence is uncharacterized protein (100 aa).

Positions proline 65–phenylalanine 96 form a coiled coil.

This is an uncharacterized protein from Acidianus filamentous virus 2 (isolate Italy/Pozzuoli) (AFV-2).